Here is a 305-residue protein sequence, read N- to C-terminus: Olfactory receptor 5M11 (305 aa).

Residues 1 to 25 (MSNTNGSAITEFILLGLTDCPELQS) are Extracellular-facing. N-linked (GlcNAc...) asparagine glycosylation occurs at N5. The chain crosses the membrane as a helical span at residues 26–46 (LLFVLFLVVYLVTLLGNLGMI). Over 47–54 (MLMRLDSR) the chain is Cytoplasmic. A helical transmembrane segment spans residues 55–75 (LHTPMYFFLTNLAFVDLCYTS). Residues 76–98 (NATPQMSTNIVSEKTISFAGCFT) lie on the Extracellular side of the membrane. A disulfide bridge links C96 with C188. Residues 99 to 119 (QCYIFIALLLTEFYMLAAMAY) traverse the membrane as a helical segment. At 120–138 (DRYVAIYDPLRYSVKTSRR) the chain is on the cytoplasmic side. Residues 139-159 (VCICLATFPYVYGFSDGLFQA) form a helical membrane-spanning segment. The Extracellular portion of the chain corresponds to 160–195 (ILTFRLTFCRSSVINHFYCADPPLIKLSCSDTYVKE). The chain crosses the membrane as a helical span at residues 196–216 (HAMFISAGFNLSSSLTIVLVS). Over 217 to 236 (YAFILAAILRIKSAEGRHKA) the chain is Cytoplasmic. Residues 237–257 (FSTCGSHMMAVTLFYGTLFCM) form a helical membrane-spanning segment. Residues 258-270 (YIRPPTDKTVEES) are Extracellular-facing. The chain crosses the membrane as a helical span at residues 271–291 (KIIAVFYTFVSPVLNPLIYSL). The Cytoplasmic portion of the chain corresponds to 292–305 (RNKDVKQALKNVLR).

This sequence belongs to the G-protein coupled receptor 1 family.

The protein resides in the cell membrane. Odorant receptor. The sequence is that of Olfactory receptor 5M11 (OR5M11) from Homo sapiens (Human).